A 127-amino-acid polypeptide reads, in one-letter code: Fluoride-specific ion channel FluC (127 aa).

Transmembrane regions (helical) follow at residues 7–27 (LFLI…LTLL), 37–57 (FGTL…LAMF), 70–90 (FFVT…AEVI), and 102–122 (ITIT…GVFI). Na(+) is bound by residues G77 and T80.

The protein belongs to the fluoride channel Fluc/FEX (TC 1.A.43) family.

The protein resides in the cell inner membrane. The enzyme catalyses fluoride(in) = fluoride(out). With respect to regulation, na(+) is not transported, but it plays an essential structural role and its presence is essential for fluoride channel function. Functionally, fluoride-specific ion channel. Important for reducing fluoride concentration in the cell, thus reducing its toxicity. This Histophilus somni (strain 129Pt) (Haemophilus somnus) protein is Fluoride-specific ion channel FluC.